Here is a 526-residue protein sequence, read N- to C-terminus: Putative UDP-glucuronosyltransferase ugt-48 (526 aa).

Residues 1 to 17 form the signal peptide; sequence MLLRILTFLAVCQVTTS. N-linked (GlcNAc...) asparagine glycans are attached at residues asparagine 58 and asparagine 305. Residues 489–509 traverse the membrane as a helical segment; sequence FYNLDIIITAASIPVLIFIVL. N-linked (GlcNAc...) asparagine glycosylation is present at asparagine 513.

The protein belongs to the UDP-glycosyltransferase family. Interacts with cmd-1 in the presence of Ca(2+).

The protein localises to the membrane. It catalyses the reaction glucuronate acceptor + UDP-alpha-D-glucuronate = acceptor beta-D-glucuronoside + UDP + H(+). The polypeptide is Putative UDP-glucuronosyltransferase ugt-48 (ugt-48) (Caenorhabditis elegans).